Reading from the N-terminus, the 198-residue chain is Guanylate kinase (198 aa).

The Guanylate kinase-like domain maps to 6-192; sequence KSIVIFTGPS…AAQEIREILH (187 aa). 13-20 lines the ATP pocket; the sequence is GPSGVGKG.

Belongs to the guanylate kinase family.

Its subcellular location is the cytoplasm. It catalyses the reaction GMP + ATP = GDP + ADP. Functionally, essential for recycling GMP and indirectly, cGMP. The sequence is that of Guanylate kinase from Mycoplasmopsis synoviae (strain 53) (Mycoplasma synoviae).